The following is a 310-amino-acid chain: Nodulation protein D 2 (310 aa).

Positions 6–63 constitute an HTH lysR-type domain; the sequence is LDLNLLVALDALMTERKLTAAARRVKLSQPAMSAAIARLRTYFGDELFSMQGRELIPT. A DNA-binding region (H-T-H motif) is located at residues 23–42; that stretch reads LTAAARRVKLSQPAMSAAIA.

It belongs to the LysR transcriptional regulatory family.

Its function is as follows. NodD regulates the expression of the nodABCFE genes which encode other nodulation proteins. NodD is also a negative regulator of its own expression. Binds flavonoids as inducers. The sequence is that of Nodulation protein D 2 (nodD2) from Rhizobium meliloti (strain 1021) (Ensifer meliloti).